An 803-amino-acid chain; its full sequence is Bifunctional enzyme MurC/Ddl (803 aa).

Positions 1 to 446 (MMKSLFYHFI…GEKLRDFEPQ (446 aa)) are UDP-N-acetylmuramate--alanine ligase. Residues 111–117 (GSHGKTT) and 600–655 (VEAF…CKEI) each bind ATP. Residues 447–803 (KLHLGIICGG…SFVDQAFAIQ (357 aa)) are D-alanine--D-alanine ligase. The 212-residue stretch at 567–778 (KRFMSDLGIP…YEQIVHQLVI (212 aa)) folds into the ATP-grasp domain. Mg(2+) is bound by residues Asp-732, Glu-745, and Asn-747.

The protein in the N-terminal section; belongs to the MurCDEF family. This sequence in the C-terminal section; belongs to the D-alanine--D-alanine ligase family. It depends on Mg(2+) as a cofactor. The cofactor is Mn(2+).

The protein localises to the cytoplasm. It catalyses the reaction UDP-N-acetyl-alpha-D-muramate + L-alanine + ATP = UDP-N-acetyl-alpha-D-muramoyl-L-alanine + ADP + phosphate + H(+). The catalysed reaction is 2 D-alanine + ATP = D-alanyl-D-alanine + ADP + phosphate + H(+). The protein operates within cell wall biogenesis; peptidoglycan biosynthesis. Its function is as follows. Cell wall formation. The protein is Bifunctional enzyme MurC/Ddl (murC/ddl) of Chlamydia trachomatis serovar D (strain ATCC VR-885 / DSM 19411 / UW-3/Cx).